The sequence spans 155 residues: Ribonuclease H (155 aa).

The 142-residue stretch at 4–145 folds into the RNase H type-1 domain; sequence QQKVVEIYTD…ADALARKAIT (142 aa). Mg(2+) is bound by residues aspartate 13, glutamate 51, aspartate 73, and aspartate 137.

The protein belongs to the RNase H family. In terms of assembly, monomer. Mg(2+) is required as a cofactor.

The protein localises to the cytoplasm. The enzyme catalyses Endonucleolytic cleavage to 5'-phosphomonoester.. Endonuclease that specifically degrades the RNA of RNA-DNA hybrids. The protein is Ribonuclease H of Bartonella quintana (strain Toulouse) (Rochalimaea quintana).